The sequence spans 777 residues: Ribosome-releasing factor 2, mitochondrial (777 aa).

Residues 68-353 enclose the tr-type G domain; sequence AKIRNIGIMA…AVTMYLPSPE (286 aa). GTP is bound by residues 77 to 84, 141 to 145, and 195 to 198; these read AHIDAGKT, DTPGH, and NKMD.

It belongs to the TRAFAC class translation factor GTPase superfamily. Classic translation factor GTPase family. EF-G/EF-2 subfamily.

The protein resides in the mitochondrion. The enzyme catalyses GTP + H2O = GDP + phosphate + H(+). Mitochondrial GTPase that mediates the disassembly of ribosomes from messenger RNA at the termination of mitochondrial protein biosynthesis. Acts in collaboration with MRRF. GTP hydrolysis follows the ribosome disassembly and probably occurs on the ribosome large subunit. Not involved in the GTP-dependent ribosomal translocation step during translation elongation. The sequence is that of Ribosome-releasing factor 2, mitochondrial from Pongo abelii (Sumatran orangutan).